A 303-amino-acid polypeptide reads, in one-letter code: Methionyl-tRNA formyltransferase (303 aa).

Position 108 to 111 (108 to 111 (SDLP)) interacts with (6S)-5,6,7,8-tetrahydrofolate.

This sequence belongs to the Fmt family.

It carries out the reaction L-methionyl-tRNA(fMet) + (6R)-10-formyltetrahydrofolate = N-formyl-L-methionyl-tRNA(fMet) + (6S)-5,6,7,8-tetrahydrofolate + H(+). Functionally, attaches a formyl group to the free amino group of methionyl-tRNA(fMet). The formyl group appears to play a dual role in the initiator identity of N-formylmethionyl-tRNA by promoting its recognition by IF2 and preventing the misappropriation of this tRNA by the elongation apparatus. In Rickettsia prowazekii (strain Madrid E), this protein is Methionyl-tRNA formyltransferase.